A 211-amino-acid polypeptide reads, in one-letter code: MISYYFQGFALGAAMILPLGPQNAFVMNQGIRRQYHLMIALLCALSDLVLISAGIFGGSALLMQSPWLLALVTWGGVAFLLWYGFGALKTAMSSNLELASAEVMKQGRWKIIATMLAVTWLNPHVYLDTFVVLGSLGGQLAMEPKRWFALGTISASFLWFFGLALLAAWLAPRLRTVKAQRIINILVGVVMWLIAFQLAREGVAHMQALFN.

6 helical membrane passes run 1-21, 37-57, 68-88, 111-131, 147-167, and 179-199; these read MISY…PLGP, LMIA…GIFG, LLAL…FGAL, IIAT…DTFV, WFAL…ALLA, and AQRI…FQLA.

This sequence belongs to the LysE/ArgO transporter (TC 2.A.75) family.

Its subcellular location is the cell inner membrane. The catalysed reaction is L-arginine(in) = L-arginine(out). Its function is as follows. Involved in the export of arginine. Important to control the intracellular level of arginine and the correct balance between arginine and lysine. The chain is Arginine exporter protein ArgO from Salmonella choleraesuis (strain SC-B67).